A 668-amino-acid polypeptide reads, in one-letter code: Metastasis-associated protein MTA2 (668 aa).

Positions 1-144 constitute a BAH domain; that stretch reads MAANMYRVGD…PVQKTLLADQ (144 aa). Phosphoserine occurs at positions 52 and 54. In terms of domain architecture, ELM2 spans 145-256; that stretch reads GEIRVGCKYQ…KAMSTLVPQG (112 aa). K152 carries the N6-acetyllysine modification. Residues 263-315 form the SANT domain; that stretch reads DEMEEWSASEAMLFEEALEKYGKDFNDIRQDFLPWKSLASIVQFYYMWKTTDR. A GATA-type; atypical zinc finger spans residues 367-394; that stretch reads CESCHTTQSAQWYAWGPPNMQCRLCASC. The segment covering 409 to 419 has biased composition (polar residues); it reads QLEGATRGTTE. Residues 409-437 are disordered; sequence QLEGATRGTTEPHSRGHLSRPEAQSLSPY. A phosphoserine mark is found at S433 and S435. Residue K460 is modified to N6-acetyllysine. A Glycyl lysine isopeptide (Lys-Gly) (interchain with G-Cter in SUMO2 and SUMO3); alternate cross-link involves residue K492. K492 is covalently cross-linked (Glycyl lysine isopeptide (Lys-Gly) (interchain with G-Cter in SUMO2); alternate). K508 is covalently cross-linked (Glycyl lysine isopeptide (Lys-Gly) (interchain with G-Cter in SUMO2)). An N6-acetyllysine mark is found at K522 and K531. The residue at position 534 (T534) is a Phosphothreonine. Position 548 is a phosphoserine (S548). Glycyl lysine isopeptide (Lys-Gly) (interchain with G-Cter in SUMO2) cross-links involve residues K559 and K595. 2 disordered regions span residues 580–599 and 647–668; these read ASGI…LNPA and PPVP…VLED.

Belongs to the metastasis-associated protein family. As to quaternary structure, component of the nucleosome remodeling and deacetylase (NuRD) repressor complex, composed of core proteins MTA1, MTA2, MTA3, RBBP4, RBBP7, HDAC1, HDAC2, MBD2, MBD3, and peripherally associated proteins CDK2AP1, CDK2AP2, GATAD2A, GATAD2B, CHD3, CHD4 and CHD5. The exact stoichiometry of the NuRD complex is unknown, and some subunits such as MBD2 and MBD3, GATAD2A and GATAD2B, and CHD3, CHD4 and CHD5 define mutually exclusive NuRD complexes. Interacts with CHD3. Interacts with CHD4. Interacts with GATAD2A. Interacts with HDAC7. Interacts with MBD3. Interacts with p53/TP53. Interacts with MINT. Interacts with PIMREG. Interacts with NACC2. Interacts with ERCC6. Interacts with PWWP2B. Interacts with transcription factor BCL11A. As to expression, widely expressed.

It localises to the nucleus. Its function is as follows. May function as a transcriptional coregulator. Acts as a component of the histone deacetylase NuRD complex which participates in the remodeling of chromatin. The protein is Metastasis-associated protein MTA2 (MTA2) of Homo sapiens (Human).